A 538-amino-acid polypeptide reads, in one-letter code: Atos homolog protein B (538 aa).

4 disordered regions span residues 1–103 (MRHV…GLVS), 130–149 (GSAT…PSSN), 163–185 (PDQG…QLHT), and 199–272 (KSPV…LGCP). Over residues 130-148 (GSATSSWTSGTQSTPWPSS) the composition is skewed to low complexity. Pro residues predominate over residues 227 to 238 (HTPPGPGPPGPC). Residues Ser-254 and Ser-255 each carry the phosphoserine modification. The tract at residues 348-430 (LLGNFEESLL…VPKVGTIQVT (83 aa)) is required for macropage invasion. A transactivation domain 1 (TAD1) region spans residues 436–444 (QTVVKMFLV).

It belongs to the ATOS family.

It is found in the nucleus. Its function is as follows. Transcription regulator that may syncronize transcriptional and translational programs. The chain is Atos homolog protein B from Rattus norvegicus (Rat).